Reading from the N-terminus, the 563-residue chain is Inositol-3-phosphate synthase 1-B (563 aa).

This sequence belongs to the myo-inositol 1-phosphate synthase family. NAD(+) serves as cofactor.

It localises to the cytoplasm. It carries out the reaction D-glucose 6-phosphate = 1D-myo-inositol 3-phosphate. Its pathway is polyol metabolism; myo-inositol biosynthesis; myo-inositol from D-glucose 6-phosphate: step 1/2. Functionally, key enzyme in myo-inositol biosynthesis pathway that catalyzes the conversion of glucose 6-phosphate to 1-myo-inositol 1-phosphate in a NAD-dependent manner. Rate-limiting enzyme in the synthesis of all inositol-containing compounds. In Xenopus laevis (African clawed frog), this protein is Inositol-3-phosphate synthase 1-B (isyna1-b).